A 302-amino-acid chain; its full sequence is Acetylesterase (302 aa).

The N-terminal stretch at 1-21 (MGRFLTTTALALLATGGAATA) is a signal peptide. N-linked (GlcNAc...) asparagine glycans are attached at residues Asn84 and Asn101.

Belongs to the carbohydrate esterase CE16 family.

It is found in the secreted. It carries out the reaction an acetyl ester + H2O = an aliphatic alcohol + acetate + H(+). In terms of biological role, acetyl esterase that acts as an exo-deacetylase. Liberates acetic acid from xylo-oligomers. The sequence is that of Acetylesterase from Thermothelomyces thermophilus (Myceliophthora thermophila).